A 458-amino-acid chain; its full sequence is BTB/POZ domain-containing protein At5g41330 (458 aa).

The region spanning 11 to 72 (NVVSINVGGR…LRTGNLPARS (62 aa)) is the BTB domain. WD repeat units lie at residues 259-305 (DSAI…MVWE), 360-399 (LNERRGVGSKIESYGNHVFCSSKGSGIELWSEVITGLVGN), and 421-458 (SGENKITGLAFGGNRMFVTRKDQQSVQVWQSPSRGISI).

Its pathway is protein modification; protein ubiquitination. Its function is as follows. May act as a substrate-specific adapter of an E3 ubiquitin-protein ligase complex (CUL3-RBX1-BTB) which mediates the ubiquitination and subsequent proteasomal degradation of target proteins. This chain is BTB/POZ domain-containing protein At5g41330, found in Arabidopsis thaliana (Mouse-ear cress).